The chain runs to 420 residues: MIOREX complex component 9 (420 aa).

A run of 2 helical transmembrane segments spans residues 125–145 (VYKVSPFFIIFATASIFTFIL) and 149–169 (IVVIPLIFHFFFPLLIMFFFF).

In terms of assembly, associates with the mitochondrial ribosome.

The protein localises to the mitochondrion. Its subcellular location is the mitochondrion membrane. Its function is as follows. Component of MIOREX complexes, large expressome-like assemblies of ribosomes with factors involved in all the steps of post-transcriptional gene expression. In Saccharomyces cerevisiae (strain ATCC 204508 / S288c) (Baker's yeast), this protein is MIOREX complex component 9.